Here is a 124-residue protein sequence, read N- to C-terminus: Small ribosomal subunit protein uS12 (124 aa).

Aspartate 89 bears the 3-methylthioaspartic acid mark. The disordered stretch occupies residues alanine 104–alanine 124. Residues arginine 112–alanine 124 are compositionally biased toward basic residues.

Belongs to the universal ribosomal protein uS12 family. In terms of assembly, part of the 30S ribosomal subunit. Contacts proteins S8 and S17. May interact with IF1 in the 30S initiation complex.

With S4 and S5 plays an important role in translational accuracy. Its function is as follows. Interacts with and stabilizes bases of the 16S rRNA that are involved in tRNA selection in the A site and with the mRNA backbone. Located at the interface of the 30S and 50S subunits, it traverses the body of the 30S subunit contacting proteins on the other side and probably holding the rRNA structure together. The combined cluster of proteins S8, S12 and S17 appears to hold together the shoulder and platform of the 30S subunit. This is Small ribosomal subunit protein uS12 from Treponema denticola (strain ATCC 35405 / DSM 14222 / CIP 103919 / JCM 8153 / KCTC 15104).